A 259-amino-acid chain; its full sequence is MTFPSHNPPETGHPSAAPDEALPAAEAPVPGDPEARFSSRSIRSFVLRQGRMSVAQQRHLDETLPKVGIPYRVAPLDLDAAFGRAAPKIVEIGFGMGETTAKIAAALPDKDFLTIEVHGPGVGSLCKLIAEGVLDNVRIVQHDAVEVLRDMIPERALAGVHVFFPDPWHKKRHHKRRIIQPDFVALIASRLAPGAYLHCATDWEEYAQWMLEVLAAEPALENTADGYAPRPAYRPLTKFENRGLKLGHGVWDLVFRRRG.

Residues 1-36 (MTFPSHNPPETGHPSAAPDEALPAAEAPVPGDPEAR) form a disordered region. The segment covering 14–29 (PSAAPDEALPAAEAPV) has biased composition (low complexity). S-adenosyl-L-methionine contacts are provided by glutamate 91, glutamate 116, aspartate 143, and aspartate 166. Aspartate 166 is a catalytic residue. Residues lysine 170, aspartate 202, and 237-240 (TKFE) each bind substrate.

It belongs to the class I-like SAM-binding methyltransferase superfamily. TrmB family.

The enzyme catalyses guanosine(46) in tRNA + S-adenosyl-L-methionine = N(7)-methylguanosine(46) in tRNA + S-adenosyl-L-homocysteine. Its pathway is tRNA modification; N(7)-methylguanine-tRNA biosynthesis. Catalyzes the formation of N(7)-methylguanine at position 46 (m7G46) in tRNA. This is tRNA (guanine-N(7)-)-methyltransferase from Aromatoleum aromaticum (strain DSM 19018 / LMG 30748 / EbN1) (Azoarcus sp. (strain EbN1)).